Here is a 313-residue protein sequence, read N- to C-terminus: HPr kinase/phosphorylase (313 aa).

Catalysis depends on residues H141 and K162. 156–163 provides a ligand contact to ATP; it reads GKSGIGKS. Residue S163 participates in Mg(2+) binding. D180 (proton acceptor; for phosphorylation activity. Proton donor; for dephosphorylation activity) is an active-site residue. Residues 203-212 are important for the catalytic mechanism of both phosphorylation and dephosphorylation; that stretch reads IEIRGIGIFD. E204 contacts Mg(2+). Residue R247 is part of the active site. Residues 268 to 273 form an important for the catalytic mechanism of dephosphorylation region; the sequence is PVSAGR.

The protein belongs to the HPrK/P family. Homohexamer. Requires Mg(2+) as cofactor.

The enzyme catalyses [HPr protein]-L-serine + ATP = [HPr protein]-O-phospho-L-serine + ADP + H(+). It catalyses the reaction [HPr protein]-O-phospho-L-serine + phosphate + H(+) = [HPr protein]-L-serine + diphosphate. In terms of biological role, catalyzes the ATP- as well as the pyrophosphate-dependent phosphorylation of a specific serine residue in HPr, a phosphocarrier protein of the phosphoenolpyruvate-dependent sugar phosphotransferase system (PTS). HprK/P also catalyzes the pyrophosphate-producing, inorganic phosphate-dependent dephosphorylation (phosphorolysis) of seryl-phosphorylated HPr (P-Ser-HPr). The two antagonistic activities of HprK/P are regulated by several intracellular metabolites, which change their concentration in response to the absence or presence of rapidly metabolisable carbon sources (glucose, fructose, etc.) in the growth medium. Therefore, by controlling the phosphorylation state of HPr, HPrK/P is a sensor enzyme that plays a major role in the regulation of carbon metabolism and sugar transport: it mediates carbon catabolite repression (CCR), and regulates PTS-catalyzed carbohydrate uptake and inducer exclusion. This chain is HPr kinase/phosphorylase, found in Mycoplasma mycoides subsp. mycoides SC (strain CCUG 32753 / NCTC 10114 / PG1).